Consider the following 415-residue polypeptide: 4-hydroxy-3-methylbut-2-en-1-yl diphosphate synthase (flavodoxin) (415 aa).

[4Fe-4S] cluster contacts are provided by Cys-298, Cys-301, Cys-344, and Glu-351.

This sequence belongs to the IspG family. The cofactor is [4Fe-4S] cluster.

It carries out the reaction (2E)-4-hydroxy-3-methylbut-2-enyl diphosphate + oxidized [flavodoxin] + H2O + 2 H(+) = 2-C-methyl-D-erythritol 2,4-cyclic diphosphate + reduced [flavodoxin]. Its pathway is isoprenoid biosynthesis; isopentenyl diphosphate biosynthesis via DXP pathway; isopentenyl diphosphate from 1-deoxy-D-xylulose 5-phosphate: step 5/6. In terms of biological role, converts 2C-methyl-D-erythritol 2,4-cyclodiphosphate (ME-2,4cPP) into 1-hydroxy-2-methyl-2-(E)-butenyl 4-diphosphate. The polypeptide is 4-hydroxy-3-methylbut-2-en-1-yl diphosphate synthase (flavodoxin) (Solibacter usitatus (strain Ellin6076)).